A 532-amino-acid chain; its full sequence is Probable cytochrome P450 524A1 (532 aa).

A helical transmembrane segment spans residues 8–28 (FIIFILLAALAVFVSEATSKV). Cysteine 478 is a heme binding site.

The protein belongs to the cytochrome P450 family. Heme serves as cofactor.

It is found in the membrane. The sequence is that of Probable cytochrome P450 524A1 (cyp524A1) from Dictyostelium discoideum (Social amoeba).